A 153-amino-acid chain; its full sequence is LOB domain-containing protein 26 (153 aa).

The region spanning 4–105 (NPCEVCRFQN…EEVSKTKKLL (102 aa)) is the LOB domain. The segment at 126–153 (KSKPSVLRKRKRKTKSSDESAIRVVEDS) is disordered. Over residues 140–153 (KSSDESAIRVVEDS) the composition is skewed to basic and acidic residues.

This sequence belongs to the LOB domain-containing protein family.

This chain is LOB domain-containing protein 26 (LBD26), found in Arabidopsis thaliana (Mouse-ear cress).